Consider the following 527-residue polypeptide: Peptide chain release factor 3 (527 aa).

One can recognise a tr-type G domain in the interval 11 to 278 (AKRRTFAIIS…GFVEWAPPPL (268 aa)). Residues 20–27 (SHPDAGKT), 87–91 (DTPGH), and 141–144 (NKMD) each bind GTP.

Belongs to the TRAFAC class translation factor GTPase superfamily. Classic translation factor GTPase family. PrfC subfamily.

It is found in the cytoplasm. Functionally, increases the formation of ribosomal termination complexes and stimulates activities of RF-1 and RF-2. It binds guanine nucleotides and has strong preference for UGA stop codons. It may interact directly with the ribosome. The stimulation of RF-1 and RF-2 is significantly reduced by GTP and GDP, but not by GMP. This chain is Peptide chain release factor 3, found in Saccharophagus degradans (strain 2-40 / ATCC 43961 / DSM 17024).